A 168-amino-acid polypeptide reads, in one-letter code: Ribosome maturation factor RimP (168 aa).

The protein belongs to the RimP family.

The protein localises to the cytoplasm. Its function is as follows. Required for maturation of 30S ribosomal subunits. The protein is Ribosome maturation factor RimP of Bordetella bronchiseptica (strain ATCC BAA-588 / NCTC 13252 / RB50) (Alcaligenes bronchisepticus).